The sequence spans 495 residues: MEPVQKLQIPYKSIRLSDGTEYQSYHTEGALSGKQPADYKNGIPAFRKEWIQKRFNHSNHSQMYFAKKGIITEEMRYAAFRENMEPEFVRSEIACGRAILPSNRNHPELEPMVIGKNFLVKINANIGNSTFSSSIEEEVEKLHWAIKWGADTVMDLSTGKNIHETREWILRNSPVPIGTVPIYQALEKVKGKTENLNIQIFLETLEEQAEQGVDYFTIHAGVLLRYIPLTTNRITGIVSRGGSILAKWCQAHHKENFLYTHFDEILKVMKKYGVSISLGDGLRPGSIADANDKAQFSELETLGELTQLAWKEDIQVMIEGPGHVPMNLIKENVDLQTKICQEAPFYTLGPIVTDIAPGYDHITSAIGAAMIGWYGTAMLCYVTPKEHLGLPNKEDVKQGVIAYKIAAHAADLAKGHPGAIDRDNLLSKARFEFRWEDQFSLSLDPETAKTFHDEMLPQDRMKTAHFCSMCGPHFCSMNLTQELRKFAQEKEIQES.

Substrate is bound by residues N125, M154, Y183, H219, 239 to 241 (SRG), 280 to 283 (DGLR), and E319. H323 serves as a coordination point for Zn(2+). Y346 contributes to the substrate binding site. H387 contributes to the Zn(2+) binding site. Residues C467, C470, and C475 each contribute to the [4Fe-4S] cluster site.

It belongs to the ThiC family. It depends on [4Fe-4S] cluster as a cofactor.

The catalysed reaction is 5-amino-1-(5-phospho-beta-D-ribosyl)imidazole + S-adenosyl-L-methionine = 4-amino-2-methyl-5-(phosphooxymethyl)pyrimidine + CO + 5'-deoxyadenosine + formate + L-methionine + 3 H(+). It participates in cofactor biosynthesis; thiamine diphosphate biosynthesis. In terms of biological role, catalyzes the synthesis of the hydroxymethylpyrimidine phosphate (HMP-P) moiety of thiamine from aminoimidazole ribotide (AIR) in a radical S-adenosyl-L-methionine (SAM)-dependent reaction. The chain is Phosphomethylpyrimidine synthase from Leptospira interrogans serogroup Icterohaemorrhagiae serovar copenhageni (strain Fiocruz L1-130).